The following is a 346-amino-acid chain: Tetraacyldisaccharide 4'-kinase (346 aa).

An ATP-binding site is contributed by 62-69; that stretch reads TAGGTGKT.

The protein belongs to the LpxK family.

It carries out the reaction a lipid A disaccharide + ATP = a lipid IVA + ADP + H(+). Its pathway is glycolipid biosynthesis; lipid IV(A) biosynthesis; lipid IV(A) from (3R)-3-hydroxytetradecanoyl-[acyl-carrier-protein] and UDP-N-acetyl-alpha-D-glucosamine: step 6/6. Its function is as follows. Transfers the gamma-phosphate of ATP to the 4'-position of a tetraacyldisaccharide 1-phosphate intermediate (termed DS-1-P) to form tetraacyldisaccharide 1,4'-bis-phosphate (lipid IVA). The sequence is that of Tetraacyldisaccharide 4'-kinase from Xanthomonas oryzae pv. oryzae (strain MAFF 311018).